The chain runs to 226 residues: 7-cyano-7-deazaguanine synthase (226 aa).

Residue 7 to 17 coordinates ATP; the sequence is LSGGMDSLVTT. Zn(2+) is bound by residues Cys-187, Cys-195, Cys-198, and Cys-201.

It belongs to the QueC family. Zn(2+) serves as cofactor.

It catalyses the reaction 7-carboxy-7-deazaguanine + NH4(+) + ATP = 7-cyano-7-deazaguanine + ADP + phosphate + H2O + H(+). It participates in purine metabolism; 7-cyano-7-deazaguanine biosynthesis. Its function is as follows. Catalyzes the ATP-dependent conversion of 7-carboxy-7-deazaguanine (CDG) to 7-cyano-7-deazaguanine (preQ(0)). This chain is 7-cyano-7-deazaguanine synthase, found in Chlorobium phaeobacteroides (strain DSM 266 / SMG 266 / 2430).